The following is a 258-amino-acid chain: Imidazole glycerol phosphate synthase subunit HisF (258 aa).

Catalysis depends on residues D12 and D131.

This sequence belongs to the HisA/HisF family. As to quaternary structure, heterodimer of HisH and HisF.

Its subcellular location is the cytoplasm. The catalysed reaction is 5-[(5-phospho-1-deoxy-D-ribulos-1-ylimino)methylamino]-1-(5-phospho-beta-D-ribosyl)imidazole-4-carboxamide + L-glutamine = D-erythro-1-(imidazol-4-yl)glycerol 3-phosphate + 5-amino-1-(5-phospho-beta-D-ribosyl)imidazole-4-carboxamide + L-glutamate + H(+). It functions in the pathway amino-acid biosynthesis; L-histidine biosynthesis; L-histidine from 5-phospho-alpha-D-ribose 1-diphosphate: step 5/9. IGPS catalyzes the conversion of PRFAR and glutamine to IGP, AICAR and glutamate. The HisF subunit catalyzes the cyclization activity that produces IGP and AICAR from PRFAR using the ammonia provided by the HisH subunit. The protein is Imidazole glycerol phosphate synthase subunit HisF of Corynebacterium glutamicum (strain R).